Reading from the N-terminus, the 1141-residue chain is Membrane-associated protein gex-3 (1141 aa).

This sequence belongs to the HEM-1/HEM-2 family. Interacts with aco-1, gei-13 and gex-2. Interacts with gex-3. In terms of tissue distribution, expressed in neurons.

It localises to the cytoplasm. Functionally, rac effector required for tissue morphogenesis, cell migrations and egg laying. May play a role in egg laying and in yolk protein clatherin-mediated endocytosis by oocytes during oogenesis. Plays a role in the formation of gap junctions between EA and EP endodermal precursor cells in embryos. This is Membrane-associated protein gex-3 from Caenorhabditis elegans.